Consider the following 565-residue polypeptide: CTP synthase (565 aa).

Residues 1–272 (MARPKNVKHI…DLRVMKKLGL (272 aa)) are amidoligase domain. A CTP-binding site is contributed by S18. Residue S18 participates in UTP binding. 19 to 24 (SLGKGI) is a binding site for ATP. Y59 is a binding site for L-glutamine. Residue D76 coordinates ATP. Residues D76 and E146 each contribute to the Mg(2+) site. Residues 153–155 (DIE), 193–198 (KTKPTQ), and K229 each bind CTP. UTP contacts are provided by residues 193–198 (KTKPTQ) and K229. The region spanning 299 to 543 (TIGVCGKYTE…VAAAKEYEKG (245 aa)) is the Glutamine amidotransferase type-1 domain. G363 is a binding site for L-glutamine. C390 acts as the Nucleophile; for glutamine hydrolysis in catalysis. L-glutamine is bound by residues 391–394 (LGMQ), E414, and R471. Residues H516 and E518 contribute to the active site.

Belongs to the CTP synthase family. As to quaternary structure, homotetramer.

It catalyses the reaction UTP + L-glutamine + ATP + H2O = CTP + L-glutamate + ADP + phosphate + 2 H(+). The enzyme catalyses L-glutamine + H2O = L-glutamate + NH4(+). It carries out the reaction UTP + NH4(+) + ATP = CTP + ADP + phosphate + 2 H(+). It participates in pyrimidine metabolism; CTP biosynthesis via de novo pathway; CTP from UDP: step 2/2. With respect to regulation, allosterically activated by GTP, when glutamine is the substrate; GTP has no effect on the reaction when ammonia is the substrate. The allosteric effector GTP functions by stabilizing the protein conformation that binds the tetrahedral intermediate(s) formed during glutamine hydrolysis. Inhibited by the product CTP, via allosteric rather than competitive inhibition. Catalyzes the ATP-dependent amination of UTP to CTP with either L-glutamine or ammonia as the source of nitrogen. Regulates intracellular CTP levels through interactions with the four ribonucleotide triphosphates. In Chlorobium phaeobacteroides (strain DSM 266 / SMG 266 / 2430), this protein is CTP synthase.